A 583-amino-acid polypeptide reads, in one-letter code: Asparagine synthetase, root [glutamine-hydrolyzing] (583 aa).

Residue Cys-2 is the For GATase activity of the active site. The region spanning 2–185 (CGILAVLGCS…PGHLYSSKDS (184 aa)) is the Glutamine amidotransferase type-2 domain. Residues 50–54 (RLAIV), 75–77 (NGE), and Asp-98 contribute to the L-glutamine site. Residues Leu-231, Val-267, and 341-342 (SG) contribute to the ATP site. An Asparagine synthetase domain is found at 237 to 516 (DSSLVASITS…PQNSARLTVP (280 aa)).

Roots.

It carries out the reaction L-aspartate + L-glutamine + ATP + H2O = L-asparagine + L-glutamate + AMP + diphosphate + H(+). It functions in the pathway amino-acid biosynthesis; L-asparagine biosynthesis; L-asparagine from L-aspartate (L-Gln route): step 1/1. The chain is Asparagine synthetase, root [glutamine-hydrolyzing] (AS2) from Pisum sativum (Garden pea).